The primary structure comprises 411 residues: MSSQQWLGDGTARRWRELHGESDWDGLLDPFDLDLRRTVIRYGEMAQATYDAFNHEKLSPHAGLSRFAARRFFERAQLPGHSAAYRVARFVYATSCVAVPEPLILRSASRARRCRESNWIGYVAVATDEGKAALGRRDIVVAWRGTVQSLEWIKDMDFVMVPPKGLLRDKASDAMVHRGWLSMYTSRDSESSHNKDSARDQVLSEVAKLVSMYQDEELSITVTGHSLGAALATLNAFDIVENGYNRAPRAAAAAAGCPVTAFVFASPRVGGHGFKRRFDGARGLGLRLLRVRNARDVVPRYPPAPPYHGVGTELAIDTGESPYLRRPGNELVWHNLECYLHGVAGARGGEAGRFKLAVERDVALANKSYGALRDEHAVPAGWWIPSNRGMVRGADGRWTLMDREEDEDSAE.

S226 (acyl-ester intermediate) is an active-site residue. Catalysis depends on charge relay system residues S226, D296, and H334.

This sequence belongs to the AB hydrolase superfamily. Lipase family.

The protein localises to the cytoplasm. Its function is as follows. Acylhydrolase that catalyzes the hydrolysis of phospholipids at the sn-1 position. This chain is Phospholipase A1-II 6, found in Oryza sativa subsp. japonica (Rice).